The primary structure comprises 772 residues: Semaphorin-3A (772 aa).

Positions 1–22 (MGWLRGIALLSLGVLLAGRVNC) are cleaved as a signal peptide. The region spanning 31–514 (RLKLSYKEML…SATGVSQLPL (484 aa)) is the Sema domain. N-linked (GlcNAc...) asparagine glycosylation occurs at N53. C103 and C114 are joined by a disulfide. Residue N125 is glycosylated (N-linked (GlcNAc...) asparagine). 4 disulfide bridges follow: C132-C141, C269-C381, C293-C341, and C517-C535. In terms of domain architecture, Ig-like C2-type spans 576-665 (PSGQTLEEKI…GFIQTLLKVT (90 aa)). N591 is a glycosylation site (N-linked (GlcNAc...) asparagine). C650 and C723 are joined by a disulfide. Residues 730–772 (DRKQRRQRPANAQVNTNKWKHLQENKKGRNRRTHEFERAPRSV) form a disordered region. Basic and acidic residues predominate over residues 750-772 (HLQENKKGRNRRTHEFERAPRSV).

It belongs to the semaphorin family. In terms of tissue distribution, expressed at relatively high levels in brain and muscle, moderate levels in lung, bursa, and heart and virtually absent in liver. Collapsin-1, -2, -3, and -5 bind to overlapping but distinct axon tracts.

The protein localises to the secreted. In terms of biological role, induces the collapse and paralysis of neuronal growth cones. Could serve as a ligand that guides specific growth cones by a motility-inhibiting mechanism. Binds to neuropilin. The protein is Semaphorin-3A (SEMA3A) of Gallus gallus (Chicken).